Reading from the N-terminus, the 1801-residue chain is Protein mono-ADP-ribosyltransferase PARP14 (1801 aa).

Residue Ser33 is modified to Phosphoserine. The segment at 109 to 132 (SKTKEDVKEPDVSEELDTKLPLDG) is disordered. Macro domains are found at residues 791-978 (KCFS…KTVF), 1003-1190 (WEKG…ARRA), and 1216-1387 (DSGV…KKRE). Residues Asn824, Leu833, 922 to 926 (SSGVF), Asp961, 1023 to 1024 (VQ), Ser1034, 1046 to 1049 (LSKS), 1133 to 1137 (GTGNL), 1175 to 1178 (DHEN), 1235 to 1236 (DI), Ser1247, Val1258, 1332 to 1336 (GTGNA), and Phe1371 contribute to the a glycoprotein site. Ser1403 and Ser1411 each carry phosphoserine. A WWE domain is found at 1523–1601 (EQESRADCIS…SLSVQRLTKS (79 aa)). The region spanning 1605–1801 (IPAHWSDMKQ…YPEYLITFRK (197 aa)) is the PARP catalytic domain.

It belongs to the ARTD/PARP family. Interacts with STAT6. Interacts with PARP10. Interacts with PARP9 in IFNG-stimulated macrophages; the interaction prevents PARP14-mediated STAT1 and STAT6 ADP-riboslylation. Auto-ADP-ribosylated. In terms of tissue distribution, expressed in macrophages.

The protein localises to the nucleus. It is found in the cytoplasm. The catalysed reaction is L-glutamyl-[protein] + NAD(+) = 5-O-(ADP-D-ribosyl)-L-glutamyl-[protein] + nicotinamide. Its function is as follows. ADP-ribosyltransferase that mediates mono-ADP-ribosylation of glutamate residues on target proteins. In contrast to PARP1 and PARP2, it is not able to mediate poly-ADP-ribosylation. Has been shown to catalyze the mono-ADP-ribosylation of STAT1 at 'Glu-657' and 'Glu-705', thus decreasing STAT1 phosphorylation which negatively regulates pro-inflammatory cytokine production in macrophages in response to IFNG stimulation. However, the role of ADP-ribosylation in the prevention of STAT1 phosphorylation has been called into question and it has been suggested that the inhibition of phosphorylation may be the result of sumoylation of STAT1 'Lys-703'. Mono-ADP-ribosylates STAT6; enhancing STAT6-dependent transcription. In macrophages, positively regulates MRC1 expression in response to IL4 stimulation by promoting STAT6 phosphorylation. Mono-ADP-ribosylates PARP9. In Homo sapiens (Human), this protein is Protein mono-ADP-ribosyltransferase PARP14.